A 784-amino-acid chain; its full sequence is DNA ligase (784 aa).

Residues Asp31 to Asp35, Ser80 to Leu81, and Glu120 each bind NAD(+). Lys122 functions as the N6-AMP-lysine intermediate in the catalytic mechanism. 4 residues coordinate NAD(+): Arg143, Glu180, Lys296, and Lys320. Residues Cys414, Cys417, Cys444, and Cys450 each contribute to the Zn(2+) site. In terms of domain architecture, BRCT spans Ala701 to Leu784.

It belongs to the NAD-dependent DNA ligase family. LigA subfamily. Mg(2+) serves as cofactor. The cofactor is Mn(2+).

It carries out the reaction NAD(+) + (deoxyribonucleotide)n-3'-hydroxyl + 5'-phospho-(deoxyribonucleotide)m = (deoxyribonucleotide)n+m + AMP + beta-nicotinamide D-nucleotide.. Functionally, DNA ligase that catalyzes the formation of phosphodiester linkages between 5'-phosphoryl and 3'-hydroxyl groups in double-stranded DNA using NAD as a coenzyme and as the energy source for the reaction. It is essential for DNA replication and repair of damaged DNA. The chain is DNA ligase from Pseudomonas entomophila (strain L48).